The following is a 218-amino-acid chain: UPF0711 protein C18orf21 homolog (218 aa).

A Phosphoserine modification is found at serine 126. The span at 130 to 146 shows a compositional bias: low complexity; it reads ASAASKASPKTPKRAAA. A disordered region spans residues 130 to 192; it reads ASAASKASPK…NGSKRKKHFS (63 aa). Threonine 140 carries the post-translational modification Phosphothreonine. Residues 147–156 show a composition bias toward polar residues; the sequence is GSTNISQSVH. Residues 161 to 172 show a composition bias toward low complexity; sequence RSPSSTVRTPTS. A compositionally biased stretch (polar residues) spans 173-183; sequence GQSTPICSSRN.

It belongs to the UPF0711 family.

In Rattus norvegicus (Rat), this protein is UPF0711 protein C18orf21 homolog.